The following is a 538-amino-acid chain: Importin subunit alpha-6 (538 aa).

The IBB domain maps to 1–58 (MSYKPSAKTEVRRNRYKVSVDADEGRRRREDNMVEIRKNKREENLQKKRREGFNPSMA). Positions 1 to 69 (MSYKPSAKTE…QPGQDFSSSL (69 aa)) are disordered. The span at 7 to 46 (AKTEVRRNRYKVSVDADEGRRRREDNMVEIRKNKREENLQ) shows a compositional bias: basic and acidic residues. Positions 56–69 (SMASQPGQDFSSSL) are enriched in polar residues. 8 ARM repeats span residues 109 to 149 (NPPI…NIAS), 152 to 191 (SENT…NVAG), 194 to 234 (PKCR…NFCR), 236 to 275 (KPQP…YLSD), 278 to 317 (NEKI…NIVT), 320 to 360 (DIQT…NITA), 363 to 402 (TSQI…NATS), and 406 to 445 (HDQI…NILK).

It belongs to the importin alpha family. Forms a complex with importin subunit beta-1.

The protein resides in the nucleus envelope. Binds to conventional NLS motifs and mediates nuclear protein import across the nuclear envelope. Acts as a cellular receptor for the nuclear import of the virD2 protein of Agrobacterium, but is not essential for Agrobacterium-mediated root transformation. The protein is Importin subunit alpha-6 of Arabidopsis thaliana (Mouse-ear cress).